The primary structure comprises 736 residues: NWMVTRINATLETKQPRQYFIGVLDIAGFEIFDFNSFEQLCINFTNEKLQQFLNHHMFVLEQEEYKKEGIEWTFIDLGMDLQACIDLIEKPMGIMSILEEECMFPKATDMTFKAKLYDNHLGKSNNFQKPRNIKGKPEAHFALIHYAGTVDYNILGWLQKNKDPLNETVVALYQKSSLKLLSNLFANYAGADAPVEKGKGKAKKGSSFQTVSALHRENLNKLMTNLRSTHPHFVRCIIPNETKSPGVIDNPLVMHQLRCNGVLEGIRICRKGFPNRILYGDFRQRYRILNPAAIPEGQFIDSRKGAEKLLSSLDIDHNQYKFGHTKVFFKAGLLGLLEEMRDERLSRIITRIQAQSRGVLSRMEYKKLLERRDSLLIIQWNIRAFMGVKNWPWMKLYFKIKPLLKSAETEKEMATMKEEFARVKEALEKSEARRKELEEKTVSLLQEKNDLQLQVQAEQDNLADAEERCDQLIKNKIQLEAKVKEMNERLEDEEEMNAELTAKKRKLEDECSELKRDIDDLELTLAKVEKEKHATENKVKNLTEEMAGLDEIIAKLTKKKKALQEAHQQALDDLQAEEDKVNTLTKAKVKLEQQVDDLEGSLEQEKKVRMDLERAKRKLEGDLKLTQESIMDLENDKQQLDERLKKKDFELNALNARIEDEQALGSQLQKKLKELQARIEELEEELEAERTARAKVEKLRSDLSRELEEISERLEEAGGATSVQIEMNKKREAEFQ.

The Myosin motor domain occupies 1 to 342 (NWMVTRINAT…LLGLLEEMRD (342 aa)). Residues 219-241 (LNKLMTNLRSTHPHFVRCIIPNE) form an actin-binding region. An IQ domain is found at 345-374 (LSRIITRIQAQSRGVLSRMEYKKLLERRDS). Residues 403–736 (LLKSAETEKE…MNKKREAEFQ (334 aa)) are a coiled coil. Ser-701 is modified (phosphoserine). Residues 716–736 (EAGGATSVQIEMNKKREAEFQ) are disordered. Residues 727-736 (MNKKREAEFQ) show a composition bias toward basic and acidic residues.

This sequence belongs to the TRAFAC class myosin-kinesin ATPase superfamily. Myosin family. Muscle myosin is a hexameric protein that consists of 2 heavy chain subunits (MHC), 2 alkali light chain subunits (MLC) and 2 regulatory light chain subunits (MLC-2). Interacts with ECPAS. Interacts (via C-terminus) with LRRC39.

It localises to the cytoplasm. It is found in the myofibril. The protein resides in the sarcomere. Myosins are actin-based motor molecules with ATPase activity essential for muscle contraction. Forms regular bipolar thick filaments that, together with actin thin filaments, constitute the fundamental contractile unit of skeletal and cardiac muscle. This is Myosin-7 (MYH7) from Oryctolagus cuniculus (Rabbit).